A 391-amino-acid polypeptide reads, in one-letter code: Paired box protein Pax-5 (391 aa).

The segment at methionine 1 to asparagine 21 is disordered. Residues glycine 16–lysine 142 constitute a DNA-binding region (paired). Residues glycine 19–threonine 75 form a PAI subdomain region. Positions lysine 94–lysine 142 are RED subdomain. The interval serine 182–aspartate 218 is disordered.

As to quaternary structure, interacts with ETS1; this interaction alters PAX5 DNA-binding properties. Binds DNA as a monomer. Interacts with TBP; this interaction allows PAX5 to interact with the basal transcription machinery. Interacts with RB1. Interacts with TLE4. Interacts with DAXX. In terms of assembly, (Microbial infection) Interacts (via N-terminus) with Epstein-Barr virus protein BZLF1 (via C-terminus); this interaction inhibits BZLF1-mediated lytic viral reactivation. Interacts also with EBNA1; this interaction promotes EBNA1-dependent transcription. Post-translationally, O-glycosylated. Phosphorylated by SYK. This phosphorylation plays an important role in the abolition of BLIMP1 repression by PAX5 in order to trigger plasma cell differentiation.

It is found in the nucleus. In terms of biological role, transcription factor that plays an essential role in commitment of lymphoid progenitors to the B-lymphocyte lineage. Fulfills a dual role by repressing B-lineage inappropriate genes and simultaneously activating B-lineage-specific genes. In turn, regulates cell adhesion and migration, induces V(H)-to-D(H)J(H) recombination, facilitates pre-B-cell receptor signaling and promotes development to the mature B-cell stage. Repression of the cohesin-release factor WAPL causes global changes of the chromosomal architecture in pro-B cells to facilitate the generation of a diverse antibody repertoire. (Microbial infection) Plays an essential role in the maintenance of Epstein-Barr virus genome copy number within the host cell by promoting EBNA1/oriP-dependent binding and transcription. Also participates in the inhibition of lytic EBV reactivation by modulating viral BZLF1 activity. This is Paired box protein Pax-5 (PAX5) from Homo sapiens (Human).